The sequence spans 226 residues: 7-cyano-7-deazaguanine synthase (226 aa).

10–20 (LSGGLDSATAA) provides a ligand contact to ATP. Zn(2+) contacts are provided by Cys-191, Cys-199, Cys-202, and Cys-205.

Belongs to the QueC family. Zn(2+) serves as cofactor.

The enzyme catalyses 7-carboxy-7-deazaguanine + NH4(+) + ATP = 7-cyano-7-deazaguanine + ADP + phosphate + H2O + H(+). The protein operates within purine metabolism; 7-cyano-7-deazaguanine biosynthesis. Catalyzes the ATP-dependent conversion of 7-carboxy-7-deazaguanine (CDG) to 7-cyano-7-deazaguanine (preQ(0)). The chain is 7-cyano-7-deazaguanine synthase from Synechococcus sp. (strain CC9311).